Here is a 428-residue protein sequence, read N- to C-terminus: Probable mannosyltransferase YUR1 (428 aa).

Over 1–3 the chain is Cytoplasmic; the sequence is MAK. A helical; Signal-anchor for type II membrane protein membrane pass occupies residues 4 to 24; sequence GGSLYIVGIFLPIWTFMIYIF. Residues 25–88 are stem region; the sequence is GKELFLIRKY…TRQNDSDSFH (64 aa). The Lumenal segment spans residues 25-428; the sequence is GKELFLIRKY…YFLKEEQDEI (404 aa). Asn77, Asn82, Asn92, and Asn167 each carry an N-linked (GlcNAc...) asparagine glycan. A catalytic region spans residues 89 to 428; sequence LRENATILML…YFLKEEQDEI (340 aa). Glu313 (nucleophile) is an active-site residue. A glycan (N-linked (GlcNAc...) asparagine) is linked at Asn414.

It belongs to the glycosyltransferase 15 family.

The protein localises to the golgi apparatus membrane. It functions in the pathway protein modification; protein glycosylation. Functionally, possible glycosyltransferase involved in N-linked glycosylation. Transfers an alpha-D-mannosyl residue from GDP-mannose into lipid-linked oligosaccharide, forming an alpha-(1-&gt;2)-D-mannosyl-D-mannose linkage. The protein is Probable mannosyltransferase YUR1 (YUR1) of Saccharomyces cerevisiae (strain ATCC 204508 / S288c) (Baker's yeast).